Reading from the N-terminus, the 77-residue chain is Conotoxin ArMSGL-0141 (77 aa).

The first 18 residues, 1–18 (MSGLGILVLTLLLLVYMA), serve as a signal peptide directing secretion. Residues 19 to 44 (TSHQDAGEKQATQRDAINVRRRRSLT) constitute a propeptide that is removed on maturation. Disulfide bonds link Cys51/Cys63, Cys55/Cys71, and Cys62/Cys75. Position 76 is a phenylalanine amide (Phe76).

It belongs to the conotoxin O3 superfamily. In terms of tissue distribution, expressed by the venom duct.

The protein resides in the secreted. The sequence is that of Conotoxin ArMSGL-0141 from Conus arenatus (Sand-dusted cone).